The sequence spans 642 residues: Extracellular metalloproteinase 4 (642 aa).

Positions 1-18 (MHGLLLAGLLALPLNVLA) are cleaved as a signal peptide. A propeptide spanning residues 19-253 (HPTESHSSGI…VHSVVDYVSA (235 aa)) is cleaved from the precursor. Residues 49 to 60 (SDSLTGQDGQSF) are compositionally biased toward polar residues. Residues 49–72 (SDSLTGQDGQSFTASSADADTSSG) form a disordered region. A compositionally biased stretch (low complexity) spans 61 to 71 (TASSADADTSS). An N-linked (GlcNAc...) asparagine glycan is attached at Asn-419. Zn(2+) is bound at residue His-436. The active site involves Glu-437. His-440 is a binding site for Zn(2+). N-linked (GlcNAc...) asparagine glycosylation is found at Asn-509 and Asn-602.

Belongs to the peptidase M36 family. Zn(2+) is required as a cofactor.

Its subcellular location is the secreted. Its function is as follows. Secreted metalloproteinase that allows assimilation of proteinaceous substrates and probably acts as a virulence factor. The sequence is that of Extracellular metalloproteinase 4 (MEP4) from Arthroderma gypseum (strain ATCC MYA-4604 / CBS 118893) (Microsporum gypseum).